Here is a 75-residue protein sequence, read N- to C-terminus: Large ribosomal subunit protein bL31 (75 aa).

It belongs to the bacterial ribosomal protein bL31 family. Type A subfamily. Part of the 50S ribosomal subunit.

Its function is as follows. Binds the 23S rRNA. The sequence is that of Large ribosomal subunit protein bL31 from Bradyrhizobium diazoefficiens (strain JCM 10833 / BCRC 13528 / IAM 13628 / NBRC 14792 / USDA 110).